Reading from the N-terminus, the 293-residue chain is Undecaprenyl-diphosphatase (293 aa).

The next 6 helical transmembrane spans lie at 74 to 94 (VLVFFAKEIWQIITGWFAGVF), 107 to 127 (WMIIVATIPVVILGVLGKDLI), 134 to 154 (MWITASVLILFSLVFILAEKM), 209 to 229 (FLLAIPAVLGSGLYSLPDAFA), 243 to 263 (VGTLFAFVVGYISIAWLMKFV), and 271 to 291 (FAAYRIPAGLLVMLLLALGML).

This sequence belongs to the UppP family.

It is found in the cell membrane. The catalysed reaction is di-trans,octa-cis-undecaprenyl diphosphate + H2O = di-trans,octa-cis-undecaprenyl phosphate + phosphate + H(+). Functionally, catalyzes the dephosphorylation of undecaprenyl diphosphate (UPP). Confers resistance to bacitracin. The sequence is that of Undecaprenyl-diphosphatase from Corynebacterium glutamicum (strain R).